The primary structure comprises 267 residues: Auxin-responsive protein IAA18 (267 aa).

An EAR-like (transcriptional repression) motif is present at residues 42 to 46 (LELKL). The segment at 81 to 101 (PSSTKTTSHKRTAPGPVVGWP) is disordered. The PB1 domain occupies 149 to 248 (GMFVKINMYG…SVKRLRVIKT (100 aa)).

This sequence belongs to the Aux/IAA family. In terms of assembly, homodimers and heterodimers. Interacts with TPL.

The protein resides in the nucleus. In terms of biological role, aux/IAA proteins are short-lived transcriptional factors that function as repressors of early auxin response genes at low auxin concentrations. Repression is thought to result from the interaction with auxin response factors (ARFs), proteins that bind to the auxin-responsive promoter element (AuxRE). Formation of heterodimers with ARF proteins may alter their ability to modulate early auxin response genes expression. This chain is Auxin-responsive protein IAA18 (IAA18), found in Arabidopsis thaliana (Mouse-ear cress).